The chain runs to 276 residues: MSNSGEDFQVVTRKKWMARKCLRRRDRHKSESDYLIDCPDVNVEKFQPRLENLCTEMCQSDYFLVAMEALQQQLEGIRKPLERIVCLGLGPFSRTYHALHQAAFVIGLHRHHKIREALYFDPVFRDSEKELIRLFDGCIMSKDCAGKHEATVPTLYYLPHCPYALMHNILWSNWKRETLPNVFLISNSFEMLTMTPRNQDDHITRIVEHCTETPLEDDYEHHNVFNDLSLHTFPQESLPGSNDEAFWTRCAPLKVNEDELITETETSLAALKLESE.

Ser-30 carries the phosphoserine modification. Residue Tyr-34 is modified to Phosphotyrosine.

It belongs to the SRR1 family.

Functionally, possible regulator involved in a circadian clock input pathway. This chain is SRR1-like protein, found in Drosophila melanogaster (Fruit fly).